The chain runs to 203 residues: ATP-dependent Clp protease proteolytic subunit (203 aa).

Catalysis depends on serine 107, which acts as the Nucleophile. Histidine 132 is an active-site residue.

It belongs to the peptidase S14 family. In terms of assembly, fourteen ClpP subunits assemble into 2 heptameric rings which stack back to back to give a disk-like structure with a central cavity, resembling the structure of eukaryotic proteasomes.

The protein resides in the cytoplasm. It carries out the reaction Hydrolysis of proteins to small peptides in the presence of ATP and magnesium. alpha-casein is the usual test substrate. In the absence of ATP, only oligopeptides shorter than five residues are hydrolyzed (such as succinyl-Leu-Tyr-|-NHMec, and Leu-Tyr-Leu-|-Tyr-Trp, in which cleavage of the -Tyr-|-Leu- and -Tyr-|-Trp bonds also occurs).. Its function is as follows. Cleaves peptides in various proteins in a process that requires ATP hydrolysis. Has a chymotrypsin-like activity. Plays a major role in the degradation of misfolded proteins. This is ATP-dependent Clp protease proteolytic subunit from Shewanella piezotolerans (strain WP3 / JCM 13877).